The following is a 317-amino-acid chain: Acetyl-coenzyme A carboxylase carboxyl transferase subunit alpha (317 aa).

One can recognise a CoA carboxyltransferase C-terminal domain in the interval 39-293 (RLESKAAAAL…GDALAEALTG (255 aa)).

This sequence belongs to the AccA family. In terms of assembly, acetyl-CoA carboxylase is a heterohexamer composed of biotin carboxyl carrier protein (AccB), biotin carboxylase (AccC) and two subunits each of ACCase subunit alpha (AccA) and ACCase subunit beta (AccD).

Its subcellular location is the cytoplasm. It catalyses the reaction N(6)-carboxybiotinyl-L-lysyl-[protein] + acetyl-CoA = N(6)-biotinyl-L-lysyl-[protein] + malonyl-CoA. It functions in the pathway lipid metabolism; malonyl-CoA biosynthesis; malonyl-CoA from acetyl-CoA: step 1/1. Its function is as follows. Component of the acetyl coenzyme A carboxylase (ACC) complex. First, biotin carboxylase catalyzes the carboxylation of biotin on its carrier protein (BCCP) and then the CO(2) group is transferred by the carboxyltransferase to acetyl-CoA to form malonyl-CoA. This chain is Acetyl-coenzyme A carboxylase carboxyl transferase subunit alpha, found in Methylobacterium nodulans (strain LMG 21967 / CNCM I-2342 / ORS 2060).